A 430-amino-acid polypeptide reads, in one-letter code: Phosphoribosylamine--glycine ligase (430 aa).

The ATP-grasp domain maps to 109 to 316 (KDFMARHGIP…LLDLIEAALN (208 aa)). 135–196 (VRQQGAPIVI…EEYLDGEEAS (62 aa)) is an ATP binding site. Mg(2+) contacts are provided by E286 and N288.

It belongs to the GARS family. Mg(2+) is required as a cofactor. Requires Mn(2+) as cofactor.

It carries out the reaction 5-phospho-beta-D-ribosylamine + glycine + ATP = N(1)-(5-phospho-beta-D-ribosyl)glycinamide + ADP + phosphate + H(+). The protein operates within purine metabolism; IMP biosynthesis via de novo pathway; N(1)-(5-phospho-D-ribosyl)glycinamide from 5-phospho-alpha-D-ribose 1-diphosphate: step 2/2. The sequence is that of Phosphoribosylamine--glycine ligase from Xylella fastidiosa (strain Temecula1 / ATCC 700964).